Consider the following 280-residue polypeptide: Putative pyruvate, phosphate dikinase regulatory protein (280 aa).

Position 156-163 (156-163 (GVSRTSKT)) interacts with ADP.

It belongs to the pyruvate, phosphate/water dikinase regulatory protein family. PDRP subfamily.

The catalysed reaction is N(tele)-phospho-L-histidyl/L-threonyl-[pyruvate, phosphate dikinase] + ADP = N(tele)-phospho-L-histidyl/O-phospho-L-threonyl-[pyruvate, phosphate dikinase] + AMP + H(+). It catalyses the reaction N(tele)-phospho-L-histidyl/O-phospho-L-threonyl-[pyruvate, phosphate dikinase] + phosphate + H(+) = N(tele)-phospho-L-histidyl/L-threonyl-[pyruvate, phosphate dikinase] + diphosphate. In terms of biological role, bifunctional serine/threonine kinase and phosphorylase involved in the regulation of the pyruvate, phosphate dikinase (PPDK) by catalyzing its phosphorylation/dephosphorylation. The protein is Putative pyruvate, phosphate dikinase regulatory protein of Hyphomonas neptunium (strain ATCC 15444).